Consider the following 118-residue polypeptide: Large ribosomal subunit protein uL18 (118 aa).

This sequence belongs to the universal ribosomal protein uL18 family. As to quaternary structure, part of the 50S ribosomal subunit; part of the 5S rRNA/L5/L18/L25 subcomplex. Contacts the 5S and 23S rRNAs.

This is one of the proteins that bind and probably mediate the attachment of the 5S RNA into the large ribosomal subunit, where it forms part of the central protuberance. This Myxococcus xanthus (strain DK1622) protein is Large ribosomal subunit protein uL18.